Reading from the N-terminus, the 405-residue chain is Prostaglandin E2 receptor EP1 subtype (405 aa).

The Extracellular portion of the chain corresponds to 1-39 (MSPCGLNLSLADEAATCATPRLPNTSVVLPTGDNGTSPA). N7, N24, and N34 each carry an N-linked (GlcNAc...) asparagine glycan. A helical membrane pass occupies residues 40 to 62 (LPIFSMTLGAVSNVLALALLAQV). At 63-80 (AGRMRRRRSAATFLLFVA) the chain is on the cytoplasmic side. The chain crosses the membrane as a helical span at residues 81–99 (SLLAIDLAGHVIPGALVLR). Topologically, residues 100–113 (LYTAGRAPAGGACH) are extracellular. C112 and C190 are disulfide-bonded. A helical membrane pass occupies residues 114 to 135 (FLGGCMVFFGLCPLLLGCGMAV). Topologically, residues 136–157 (ERCVGVTQPLIHAARVSVARAR) are cytoplasmic. Residues 158-179 (LALAVLAAMALAVALLPLVHVG) form a helical membrane-spanning segment. Residues 180-202 (RYELQYPGTWCFISLGPRGGWRQ) lie on the Extracellular side of the membrane. A helical membrane pass occupies residues 203–228 (ALLAGLFAGLGLAALLAALVCNTLSG). Over 229-301 (LALLRARWRR…HAHDVEMVGQ (73 aa)) the chain is Cytoplasmic. Positions 243–287 (RFRKTAGPDDRRRWGSRGPRLASASSASSITSATATLRSSRGGGS) are disordered. Over residues 262-282 (RLASASSASSITSATATLRSS) the composition is skewed to low complexity. The helical transmembrane segment at 302–323 (LVGIMVVSCICWSPLLVLVVLA) threads the bilayer. Over 324–337 (IGGWNSNSLQRPLF) the chain is Extracellular. A helical membrane pass occupies residues 338–357 (LAVRLASWNQILDPWVYILL). At 358–405 (RQAMLRQLLRLLPLRVSAKGGPTELGLTKSAWEASSLRSSRHSGFSHL) the chain is on the cytoplasmic side.

This sequence belongs to the G-protein coupled receptor 1 family. Post-translationally, phosphorylated. In terms of tissue distribution, abundant in kidney and in a lesser amount in lung.

The protein localises to the cell membrane. Functionally, receptor for prostaglandin E2 (PGE2). The activity of this receptor is mediated by G(q) proteins which activate a phosphatidylinositol-calcium second messenger system. May play a role as an important modulator of renal function. Implicated the smooth muscle contractile response to PGE2 in various tissues. This chain is Prostaglandin E2 receptor EP1 subtype (Ptger1), found in Mus musculus (Mouse).